Reading from the N-terminus, the 160-residue chain is Transcription elongation factor GreA (160 aa).

A coiled-coil region spans residues 1–71 (MAEKTYPMTK…GQISTLETQI (71 aa)).

Belongs to the GreA/GreB family.

Necessary for efficient RNA polymerase transcription elongation past template-encoded arresting sites. The arresting sites in DNA have the property of trapping a certain fraction of elongating RNA polymerases that pass through, resulting in locked ternary complexes. Cleavage of the nascent transcript by cleavage factors such as GreA or GreB allows the resumption of elongation from the new 3'terminus. GreA releases sequences of 2 to 3 nucleotides. The protein is Transcription elongation factor GreA of Streptococcus uberis (strain ATCC BAA-854 / 0140J).